A 229-amino-acid polypeptide reads, in one-letter code: UPF0500 protein C1orf216 (229 aa).

Residues 1–144 form a disordered region; that stretch reads MFAIQPGLAE…RGPGPPDPLL (144 aa). Over residues 62 to 71 the composition is skewed to polar residues; the sequence is SESPSDNQAF. 2 stretches are compositionally biased toward low complexity: residues 84–93 and 115–126; these read PPEGAEIPGA and SSSLSIDSRSSS.

This sequence belongs to the UPF0500 family.

The chain is UPF0500 protein C1orf216 (C1orf216) from Homo sapiens (Human).